Reading from the N-terminus, the 170-residue chain is Flavodoxin (170 aa).

The 162-residue stretch at 4–165 (IGLFYGTQTG…RVKTWVSEIK (162 aa)) folds into the Flavodoxin-like domain.

This sequence belongs to the flavodoxin family. FMN is required as a cofactor.

Its function is as follows. Low-potential electron donor to a number of redox enzymes. This chain is Flavodoxin (isiB), found in Synechocystis sp. (strain ATCC 27184 / PCC 6803 / Kazusa).